A 961-amino-acid chain; its full sequence is Retinoblastoma-related protein 1 (961 aa).

The interval 404 to 606 (TPVSTAMTTA…EKGSSMYNSL (203 aa)) is domain A. A pocket region spans residues 404 to 819 (TPVSTAMTTA…NEMFIPSVKP (416 aa)). A spacer region spans residues 607–728 (AVAKPSLAAE…PGGGGETCAE (122 aa)). Residues 729–819 (TAINVFFGKI…NEMFIPSVKP (91 aa)) form a domain B region. A disordered region spans residues 829 to 856 (NAEKNNHNDGQGPASPKPSPFPKLPDMS).

Belongs to the retinoblastoma protein (RB) family.

The protein localises to the nucleus. Its function is as follows. Regulator of biological processes that recruits a histone deacetylase to control gene transcription. May play a role in the entry into mitosis, negatively regulating the cell proliferation. Formation of stable complexes with geminiviridae replication-associated proteins may create a cellular environment which favors viral DNA replication. In Nicotiana tabacum (Common tobacco), this protein is Retinoblastoma-related protein 1 (RB1).